Here is a 222-residue protein sequence, read N- to C-terminus: Germin-like protein subfamily 1 member 4 (222 aa).

An N-terminal signal peptide occupies residues 1–24 (MEGLLQFLLAKIILLALASSFVYC). Cys-34 and Cys-50 form a disulfide bridge. Residue Asn-38 is glycosylated (N-linked (GlcNAc...) asparagine). Residues 64 to 215 (SGLNVPGNTI…AFALDYNKVK (152 aa)) form the Cupin type-1 domain. Residues His-112 and His-114 each coordinate Mn(2+). Residue Asn-139 is glycosylated (N-linked (GlcNAc...) asparagine). His-161 provides a ligand contact to Mn(2+).

The protein belongs to the germin family. As to quaternary structure, oligomer (believed to be a pentamer but probably hexamer).

Its subcellular location is the secreted. The protein localises to the extracellular space. It localises to the apoplast. May play a role in plant defense. Probably has no oxalate oxidase activity even if the active site is conserved. The polypeptide is Germin-like protein subfamily 1 member 4 (Arabidopsis thaliana (Mouse-ear cress)).